The following is a 429-amino-acid chain: Probable E3 ubiquitin-protein ligase makorin-1 (429 aa).

C3H1-type zinc fingers lie at residues 18–45 (WTKHVTCRYFMHGLCKEGDNCRYSHDLT), 48–75 (KPAAMMCKFFQKGNCVFGERCRFEHCKP), and 153–180 (ELRKQLCPYAAVGECRYGVNCAYLHGDV). Residues 181 to 208 (CDMCGLQVLHPTDSSQRSEHTKACIEAH) are makorin-type Cys-His. The segment at 226–280 (CGVCMEVVFEKANPSERRFGILSNCSHCYCLKCIRKWRSAKQFESKIIKSCPECR) adopts an RING-type zinc-finger fold. The C3H1-type 4 zinc-finger motif lies at 309–338 (GMGRKPCRYFDEGRGICPFGANCFYKHAFP). Residues 343–362 (EEAQPQRRQTGSSSRNRNSR) form a disordered region. Positions 348 to 358 (QRRQTGSSSRN) are enriched in low complexity.

The enzyme catalyses S-ubiquitinyl-[E2 ubiquitin-conjugating enzyme]-L-cysteine + [acceptor protein]-L-lysine = [E2 ubiquitin-conjugating enzyme]-L-cysteine + N(6)-ubiquitinyl-[acceptor protein]-L-lysine.. The protein operates within protein modification; protein ubiquitination. Functionally, E3 ubiquitin ligase catalyzing the covalent attachment of ubiquitin moieties onto substrate proteins. The protein is Probable E3 ubiquitin-protein ligase makorin-1 of Takifugu rubripes (Japanese pufferfish).